The sequence spans 167 residues: Probable glutathione peroxidase 8 (167 aa).

The active site involves Cys-41.

This sequence belongs to the glutathione peroxidase family.

It catalyses the reaction 2 glutathione + H2O2 = glutathione disulfide + 2 H2O. Functionally, may constitute a glutathione peroxidase-like protective system against oxidative stresses. In Arabidopsis thaliana (Mouse-ear cress), this protein is Probable glutathione peroxidase 8 (GPX8).